A 385-amino-acid polypeptide reads, in one-letter code: Arginine biosynthesis bifunctional protein ArgJ (385 aa).

Substrate-binding residues include threonine 142, lysine 168, threonine 179, glutamate 259, asparagine 380, and threonine 385. Residue threonine 179 is the Nucleophile of the active site.

It belongs to the ArgJ family. In terms of assembly, heterotetramer of two alpha and two beta chains.

Its subcellular location is the cytoplasm. The enzyme catalyses N(2)-acetyl-L-ornithine + L-glutamate = N-acetyl-L-glutamate + L-ornithine. The catalysed reaction is L-glutamate + acetyl-CoA = N-acetyl-L-glutamate + CoA + H(+). It functions in the pathway amino-acid biosynthesis; L-arginine biosynthesis; L-ornithine and N-acetyl-L-glutamate from L-glutamate and N(2)-acetyl-L-ornithine (cyclic): step 1/1. The protein operates within amino-acid biosynthesis; L-arginine biosynthesis; N(2)-acetyl-L-ornithine from L-glutamate: step 1/4. Its function is as follows. Catalyzes two activities which are involved in the cyclic version of arginine biosynthesis: the synthesis of N-acetylglutamate from glutamate and acetyl-CoA as the acetyl donor, and of ornithine by transacetylation between N(2)-acetylornithine and glutamate. In Leptospira interrogans serogroup Icterohaemorrhagiae serovar Lai (strain 56601), this protein is Arginine biosynthesis bifunctional protein ArgJ.